Here is a 299-residue protein sequence, read N- to C-terminus: Oxygen-dependent coproporphyrinogen-III oxidase (299 aa).

Ser-92 provides a ligand contact to substrate. Positions 96 and 106 each coordinate a divalent metal cation. His-106 (proton donor) is an active-site residue. A substrate-binding site is contributed by Asn-108–Arg-110. Residues His-145 and His-175 each coordinate a divalent metal cation. Positions Tyr-239–Glu-274 are important for dimerization. Gly-257 to Arg-259 contributes to the substrate binding site.

Belongs to the aerobic coproporphyrinogen-III oxidase family. Homodimer. The cofactor is a divalent metal cation.

The protein localises to the cytoplasm. The catalysed reaction is coproporphyrinogen III + O2 + 2 H(+) = protoporphyrinogen IX + 2 CO2 + 2 H2O. It participates in porphyrin-containing compound metabolism; protoporphyrin-IX biosynthesis; protoporphyrinogen-IX from coproporphyrinogen-III (O2 route): step 1/1. Functionally, involved in the heme biosynthesis. Catalyzes the aerobic oxidative decarboxylation of propionate groups of rings A and B of coproporphyrinogen-III to yield the vinyl groups in protoporphyrinogen-IX. This chain is Oxygen-dependent coproporphyrinogen-III oxidase, found in Xanthomonas oryzae pv. oryzae (strain MAFF 311018).